We begin with the raw amino-acid sequence, 840 residues long: Probable alpha-glucuronidase A (840 aa).

An N-terminal signal peptide occupies residues 1-19; sequence MWSGIPIFALLSSIGIAAA. Asn50, Asn149, Asn222, Asn262, Asn279, Asn310, Asn465, Asn527, Asn576, Asn610, Asn682, Asn723, and Asn732 each carry an N-linked (GlcNAc...) asparagine glycan.

Belongs to the glycosyl hydrolase 67 family.

Its subcellular location is the secreted. The catalysed reaction is an alpha-D-glucuronoside + H2O = D-glucuronate + an alcohol. In terms of biological role, alpha-glucuronidase involved in the hydrolysis of xylan, a major structural heterogeneous polysaccharide found in plant biomass representing the second most abundant polysaccharide in the biosphere, after cellulose. Releases 4-O-methylglucuronic acid from xylan. This chain is Probable alpha-glucuronidase A (aguA), found in Aspergillus fumigatus (strain CBS 144.89 / FGSC A1163 / CEA10) (Neosartorya fumigata).